Reading from the N-terminus, the 311-residue chain is Transcriptional repressor scratch 2 (311 aa).

Residues 1 to 20 (MPRSFLVKKIKADGFQCSGV) form an SNAG domain region. 2 disordered regions span residues 71–90 (PAYPAAASEEYSDPESPQSS) and 120–156 (RRRAGAGGDAAGAGDAGGGGGGGGGGERAGRSGATAG). A compositionally biased stretch (gly residues) spans 124–146 (GAGGDAAGAGDAGGGGGGGGGGE). C2H2-type zinc fingers lie at residues 161-183 (HACAECGKTYATSSNLSRHKQTH), 192-214 (RKCPTCGKAYVSMPALAMHVLTH), 218-240 (HKCGVCGKAFSRPWLLQGHMRSH), and 246-268 (FGCAHCGKAFADRSNLRAHMQTH). The C2H2-type 5; atypical zinc finger occupies 274-297 (YRCRQCDKSFALKSYLHKHCEAAC).

It belongs to the snail C2H2-type zinc-finger protein family.

Its subcellular location is the nucleus. May be involved in transcriptional regulation. This Mus musculus (Mouse) protein is Transcriptional repressor scratch 2 (Scrt2).